The primary structure comprises 258 residues: Cytochrome b-c1 complex subunit Rieske-1, mitochondrial (258 aa).

Residues 1-46 (WPVRSAAPSSSAFISANHFSSDDDSSSPRSISPSLASVFLHHTRGF) constitute a mitochondrion transit peptide. Over 47–95 (SSNSVSPAHDMGLVPDLPPTVAAIKNPTSKIVYDEHNHERYPPGDPSKR) the chain is Mitochondrial matrix. The chain crosses the membrane as a helical span at residues 96–118 (AFAYFVLTGGRFVYASLMRLLIL). Residues 119-258 (KFVLSMSASK…FLEENKLLIG (140 aa)) are Mitochondrial intermembrane-facing. The 96-residue stretch at 161 to 256 (RRRTEDDISL…YSFLEENKLL (96 aa)) folds into the Rieske domain. [2Fe-2S] cluster-binding residues include cysteine 201, histidine 203, cysteine 220, and histidine 223. A disulfide bridge links cysteine 206 with cysteine 222.

The protein belongs to the Rieske iron-sulfur protein family. Component of the ubiquinol-cytochrome c oxidoreductase (cytochrome b-c1 complex, complex III, CIII), a multisubunit enzyme composed of 3 respiratory subunits cytochrome b, cytochrome c1 and Rieske protein, 2 core protein subunits, and several low-molecular weight protein subunits. The complex exists as an obligatory dimer and forms supercomplexes (SCs) in the inner mitochondrial membrane with cytochrome c oxidase (complex IV, CIV). It depends on [2Fe-2S] cluster as a cofactor.

The protein localises to the mitochondrion inner membrane. The catalysed reaction is a quinol + 2 Fe(III)-[cytochrome c](out) = a quinone + 2 Fe(II)-[cytochrome c](out) + 2 H(+)(out). Functionally, component of the ubiquinol-cytochrome c oxidoreductase, a multisubunit transmembrane complex that is part of the mitochondrial electron transport chain which drives oxidative phosphorylation. The respiratory chain contains 3 multisubunit complexes succinate dehydrogenase (complex II, CII), ubiquinol-cytochrome c oxidoreductase (cytochrome b-c1 complex, complex III, CIII) and cytochrome c oxidase (complex IV, CIV), that cooperate to transfer electrons derived from NADH and succinate to molecular oxygen, creating an electrochemical gradient over the inner membrane that drives transmembrane transport and the ATP synthase. The cytochrome b-c1 complex catalyzes electron transfer from ubiquinol to cytochrome c, linking this redox reaction to translocation of protons across the mitochondrial inner membrane, with protons being carried across the membrane as hydrogens on the quinol. In the process called Q cycle, 2 protons are consumed from the matrix, 4 protons are released into the intermembrane space and 2 electrons are passed to cytochrome c. The Rieske protein is a catalytic core subunit containing a [2Fe-2S] iron-sulfur cluster. It cycles between 2 conformational states during catalysis to transfer electrons from the quinol bound in the Q(0) site in cytochrome b to cytochrome c1. This chain is Cytochrome b-c1 complex subunit Rieske-1, mitochondrial, found in Nicotiana tabacum (Common tobacco).